Consider the following 611-residue polypeptide: DNA mismatch repair protein MutL (611 aa).

It belongs to the DNA mismatch repair MutL/HexB family.

Its function is as follows. This protein is involved in the repair of mismatches in DNA. It is required for dam-dependent methyl-directed DNA mismatch repair. May act as a 'molecular matchmaker', a protein that promotes the formation of a stable complex between two or more DNA-binding proteins in an ATP-dependent manner without itself being part of a final effector complex. The protein is DNA mismatch repair protein MutL of Rickettsia bellii (strain RML369-C).